A 328-amino-acid polypeptide reads, in one-letter code: Alanine racemase (328 aa).

Residue K33 is the Proton acceptor; specific for D-alanine of the active site. K33 is modified (N6-(pyridoxal phosphate)lysine). Substrate is bound at residue R118. Y237 acts as the Proton acceptor; specific for L-alanine in catalysis. M283 is a substrate binding site.

Belongs to the alanine racemase family. The cofactor is pyridoxal 5'-phosphate.

It carries out the reaction L-alanine = D-alanine. The protein operates within amino-acid biosynthesis; D-alanine biosynthesis; D-alanine from L-alanine: step 1/1. Functionally, catalyzes the interconversion of L-alanine and D-alanine. May also act on other amino acids. The protein is Alanine racemase (alr) of Campylobacter jejuni subsp. jejuni serotype O:6 (strain 81116 / NCTC 11828).